The chain runs to 116 residues: Large ribosomal subunit protein bL19 (116 aa).

It belongs to the bacterial ribosomal protein bL19 family.

Functionally, this protein is located at the 30S-50S ribosomal subunit interface and may play a role in the structure and function of the aminoacyl-tRNA binding site. This Staphylococcus saprophyticus subsp. saprophyticus (strain ATCC 15305 / DSM 20229 / NCIMB 8711 / NCTC 7292 / S-41) protein is Large ribosomal subunit protein bL19.